The following is a 490-amino-acid chain: MYKQPRQELEAYYFEPNSVEKLRYLPVNNSRKRFCTLEPFPDSPPYNALSTATYDDTCGSCVTDELNDFKHKIREIETVMMGPDSLDLLVDCTDSFDSTASQEINGWRSTLEAISRRDLRADLVSCAKAMSENDLMMAHSMMEKLRQMVSVSGEPIQRLGAYLLEGLVAQLASSGSSIYKALNRCPEPASTELLSYMHILYEVCPYFKFGYMSANGAIAEAMKEENRVHIIDFQIGQGSQWVTLIQAFAARPGGPPRIRITGIDDMTSAYARGGGLSIVGNRLAKLAKQFNVPFEFNSVSVSVSEVKPKNLGVRPGEALAVNFAFVLHHMPDESVSTENHRDRLLRMVKSLSPKVVTLVEQESNTNTAAFFPRFMETMNYYAAMFESIDVTLPRDHKQRINVEQHCLARDVVNIIACEGADRVERHELLGKWRSRFGMAGFTPYPLSPLVNSTIKSLLRNYSDKYRLEERDGALYLGWMHRDLVASCAWK.

The region spanning 110–490 (TLEAISRRDL…RDLVASCAWK (381 aa)) is the GRAS domain. A leucine repeat I (LRI) region spans residues 117-178 (RDLRADLVSC…AQLASSGSSI (62 aa)). The tract at residues 197–262 (MHILYEVCPY…GGPPRIRITG (66 aa)) is VHIID. Residues 228-232 (VHIID) carry the VHIID motif. The segment at 278-310 (IVGNRLAKLAKQFNVPFEFNSVSVSVSEVKPKN) is leucine repeat II (LRII). Positions 319-413 (LAVNFAFVLH…QHCLARDVVN (95 aa)) are PFYRE. The segment at 416-490 (ACEGADRVER…RDLVASCAWK (75 aa)) is SAW.

This sequence belongs to the GRAS family.

It is found in the cytoplasm. Its function is as follows. Probable transcription factor involved in phytochrome A (phyA) signal transduction. The protein is Scarecrow-like transcription factor PAT1 (PAT1) of Arabidopsis thaliana (Mouse-ear cress).